The sequence spans 479 residues: Adenosylhomocysteinase (479 aa).

Substrate is bound by residues Thr-56, Asp-133, and Glu-199. 200 to 202 lines the NAD(+) pocket; the sequence is TTT. Substrate is bound by residues Lys-229 and Asp-233. Residues Asn-234, 263 to 268, Glu-286, Asn-321, 342 to 344, and Asn-390 contribute to the NAD(+) site; these read GYGDVG and IGH.

It belongs to the adenosylhomocysteinase family. Homotetramer. The cofactor is NAD(+).

It carries out the reaction S-adenosyl-L-homocysteine + H2O = L-homocysteine + adenosine. Its pathway is amino-acid biosynthesis; L-homocysteine biosynthesis; L-homocysteine from S-adenosyl-L-homocysteine: step 1/1. In terms of biological role, adenosylhomocysteine is a competitive inhibitor of S-adenosyl-L-methionine-dependent methyl transferase reactions; therefore adenosylhomocysteinase may play a key role in the control of methylations via regulation of the intracellular concentration of adenosylhomocysteine. This is Adenosylhomocysteinase from Plasmodium chabaudi chabaudi.